We begin with the raw amino-acid sequence, 382 residues long: Adenosine 3'-phospho 5'-phosphosulfate transporter 2 (382 aa).

Over residues 1-10 (MSVSNRNGNG) the composition is skewed to polar residues. The tract at residues 1 to 33 (MSVSNRNGNGSEVIYVGDRSTNRPPRNAPSPDE) is disordered. The next 10 helical transmembrane spans lie at 56-76 (LCCA…ELIF), 83-103 (PYGW…GYVE), 121-141 (VLLA…LGYL), 144-164 (PTQV…SILI), 170-190 (GPLD…FTLA), 197-217 (NFNP…AAIG), 234-254 (VVIY…LLTG), 271-291 (FGYA…VLTL), 299-319 (LAAT…FVFF), and 323-343 (FTIN…LNVY).

This sequence belongs to the nucleotide-sugar transporter family. SLC35B subfamily.

The protein localises to the golgi apparatus membrane. Its function is as follows. Mediates the transport of adenosine 3'-phospho 5'-phosphosulfate (PAPS), from cytosol into Golgi. PAPS is a universal sulfuryl donor for sulfation events that take place in the Golgi. Essential for viability. Involved in glycosaminoglycan synthesis and the subsequent signaling. May be involved in hh and dpp signaling by controlling the sulfation of heparan sulfate (HS). This is Adenosine 3'-phospho 5'-phosphosulfate transporter 2 from Aedes aegypti (Yellowfever mosquito).